A 247-amino-acid chain; its full sequence is Adenosylcobinamide-GDP ribazoletransferase (247 aa).

Helical transmembrane passes span 34-54 (IITFPLIGLLLGAISGLVFMV), 59-79 (CGAPLAALFSVLVLVLMTGGF), 113-133 (GGLALIFVVLAKILVLSELAL), 138-158 (ILASLAAACAISRGTAALLMY), and 194-214 (VLLPGMHGVAAMVVTMVAIFI).

The protein belongs to the CobS family. Mg(2+) is required as a cofactor.

It localises to the cell inner membrane. The enzyme catalyses alpha-ribazole + adenosylcob(III)inamide-GDP = adenosylcob(III)alamin + GMP + H(+). It catalyses the reaction alpha-ribazole 5'-phosphate + adenosylcob(III)inamide-GDP = adenosylcob(III)alamin 5'-phosphate + GMP + H(+). It functions in the pathway cofactor biosynthesis; adenosylcobalamin biosynthesis; adenosylcobalamin from cob(II)yrinate a,c-diamide: step 7/7. Its function is as follows. Joins adenosylcobinamide-GDP and alpha-ribazole to generate adenosylcobalamin (Ado-cobalamin). Also synthesizes adenosylcobalamin 5'-phosphate from adenosylcobinamide-GDP and alpha-ribazole 5'-phosphate. The polypeptide is Adenosylcobinamide-GDP ribazoletransferase (Escherichia coli O45:K1 (strain S88 / ExPEC)).